Consider the following 258-residue polypeptide: 6-phosphogluconolactonase (258 aa).

This sequence belongs to the glucosamine/galactosamine-6-phosphate isomerase family. 6-phosphogluconolactonase subfamily.

The catalysed reaction is 6-phospho-D-glucono-1,5-lactone + H2O = 6-phospho-D-gluconate + H(+). The protein operates within carbohydrate degradation; pentose phosphate pathway; D-ribulose 5-phosphate from D-glucose 6-phosphate (oxidative stage): step 2/3. Its function is as follows. Hydrolysis of 6-phosphogluconolactone to 6-phosphogluconate. The chain is 6-phosphogluconolactonase (pgl) from Chlamydia pneumoniae (Chlamydophila pneumoniae).